Consider the following 462-residue polypeptide: Argininosuccinate lyase (462 aa).

This sequence belongs to the lyase 1 family. Argininosuccinate lyase subfamily.

Its subcellular location is the cytoplasm. It catalyses the reaction 2-(N(omega)-L-arginino)succinate = fumarate + L-arginine. It participates in amino-acid biosynthesis; L-arginine biosynthesis; L-arginine from L-ornithine and carbamoyl phosphate: step 3/3. This is Argininosuccinate lyase from Ehrlichia ruminantium (strain Welgevonden).